Consider the following 295-residue polypeptide: Protoheme IX farnesyltransferase (295 aa).

Transmembrane regions (helical) follow at residues 24 to 44, 45 to 65, 94 to 114, 117 to 137, 144 to 164, 171 to 191, 216 to 236, 240 to 260, and 272 to 292; these read IMYLVVFTAVAGMVTAPGSMH, PFLALISLICVALGSGSAGAI, SALEFGITLGILSVFIMAIAV, ISAALLAVSILFYVFIYTIWL, NIVIGGAAGAFPPMIGWAAVT, SFILFLVIFMWTPPHFWALSL, KYILIYSVLLVLTSLLPALFL, LLYLSMATFEGCVFIWYAVSV, and MFSYSISYLFSLFASIIFCSI.

Belongs to the UbiA prenyltransferase family. Protoheme IX farnesyltransferase subfamily.

The protein resides in the cell membrane. The enzyme catalyses heme b + (2E,6E)-farnesyl diphosphate + H2O = Fe(II)-heme o + diphosphate. Its pathway is porphyrin-containing compound metabolism; heme O biosynthesis; heme O from protoheme: step 1/1. In terms of biological role, converts heme B (protoheme IX) to heme O by substitution of the vinyl group on carbon 2 of heme B porphyrin ring with a hydroxyethyl farnesyl side group. The protein is Protoheme IX farnesyltransferase of Wolbachia pipientis wMel.